Consider the following 256-residue polypeptide: Probable aquaporin TIP4-2 (256 aa).

5 helical membrane passes run 25-45 (AVAG…ASTI), 59-79 (AVTA…TAGF), 86-108 (LNPA…SALY), 146-166 (GVAA…ATIL), and 178-198 (PLLT…LTGA). The short motif at 87-89 (NPA) is the NPA 1 element. An NPA 2 motif is present at residues 201 to 203 (NPA). A helical membrane pass occupies residues 220-240 (VYWVGPLAGGPLAVVAYELLF).

It belongs to the MIP/aquaporin (TC 1.A.8) family. TIP (TC 1.A.8.10) subfamily. In terms of tissue distribution, expressed in roots, leaves and anthers.

The protein localises to the vacuole membrane. Its function is as follows. Aquaporins facilitate the transport of water and small neutral solutes across cell membranes. May be involved in transport from the vacuolar compartment to the cytoplasm. In Oryza sativa subsp. japonica (Rice), this protein is Probable aquaporin TIP4-2 (TIP4-2).